Here is a 607-residue protein sequence, read N- to C-terminus: Polyphenol oxidase, chloroplastic (607 aa).

Residues 1–103 constitute a chloroplast transit peptide; that stretch reads MASLPWSLTT…LGATKPLAFG (103 aa). The disordered stretch occupies residues 39 to 73; the sequence is RNRSRRFAPSKVSCNSANGDPNSDSTSDVRETSSG. A compositionally biased stretch (polar residues) spans 50 to 64; that stretch reads VSCNSANGDPNSDST. Cystine bridges form between Cys-114/Cys-129 and Cys-128/Cys-191. Positions 190, 211, 220, 342, 346, and 375 each coordinate Cu cation. Residues 194-211 constitute a cross-link (2'-(S-cysteinyl)-histidine (Cys-His)); the sequence is CQGAYDQVGYTDLELQVH.

The protein belongs to the tyrosinase family. Cu(2+) serves as cofactor.

Its subcellular location is the plastid. The protein resides in the chloroplast thylakoid lumen. It carries out the reaction 2 catechol + O2 = 2 1,2-benzoquinone + 2 H2O. Its function is as follows. Catalyzes the oxidation of mono- and o-diphenols to o-diquinones. This is Polyphenol oxidase, chloroplastic from Vitis vinifera (Grape).